Reading from the N-terminus, the 417-residue chain is NADH-quinone oxidoreductase subunit D (417 aa).

This sequence belongs to the complex I 49 kDa subunit family. NDH-1 is composed of 14 different subunits. Subunits NuoB, C, D, E, F, and G constitute the peripheral sector of the complex.

Its subcellular location is the cell inner membrane. It catalyses the reaction a quinone + NADH + 5 H(+)(in) = a quinol + NAD(+) + 4 H(+)(out). Its function is as follows. NDH-1 shuttles electrons from NADH, via FMN and iron-sulfur (Fe-S) centers, to quinones in the respiratory chain. The immediate electron acceptor for the enzyme in this species is believed to be ubiquinone. Couples the redox reaction to proton translocation (for every two electrons transferred, four hydrogen ions are translocated across the cytoplasmic membrane), and thus conserves the redox energy in a proton gradient. The polypeptide is NADH-quinone oxidoreductase subunit D (Cupriavidus necator (strain ATCC 17699 / DSM 428 / KCTC 22496 / NCIMB 10442 / H16 / Stanier 337) (Ralstonia eutropha)).